Here is a 101-residue protein sequence, read N- to C-terminus: DNA-binding protein TubR (101 aa).

In terms of assembly, homodimer. Dimers bind to DNA, forming a protein-bound filament which may form a helix around the TubZ filament.

Its function is as follows. A DNA-binding protein that is part of the type III plasmid partition system used to ensure correct segregation of the pBM400 plasmid. Binds the plasmid origin of replication, probably cooperatively, forming a ring or short helix with external DNA. Its effect on RNA expression has not been shown. This chain is DNA-binding protein TubR, found in Priestia megaterium (strain ATCC 12872 / QMB1551) (Bacillus megaterium).